A 259-amino-acid polypeptide reads, in one-letter code: Putative protein phosphatase (259 aa).

Residues 8–255 (LFASLSKKGP…DNITLNLINL (248 aa)) enclose the PPM-type phosphatase domain.

The enzyme catalyses O-phospho-L-seryl-[protein] + H2O = L-seryl-[protein] + phosphate. The catalysed reaction is O-phospho-L-threonyl-[protein] + H2O = L-threonyl-[protein] + phosphate. The protein is Putative protein phosphatase of Mycoplasma pneumoniae (strain ATCC 29342 / M129 / Subtype 1) (Mycoplasmoides pneumoniae).